Consider the following 174-residue polypeptide: Putative FAS1 domain-containing protein 096L (174 aa).

One can recognise an FAS1 domain in the interval 36–171 (PDTLWSKLNE…GIIHLMEEVY (136 aa)).

The polypeptide is Putative FAS1 domain-containing protein 096L (Acheta domesticus (House cricket)).